Here is a 255-residue protein sequence, read N- to C-terminus: Microfibril-associated glycoprotein 4 (255 aa).

Positions 1-21 (MKALLALPLLLLLSTPPCAPQ) are cleaved as a signal peptide. A Cell attachment site motif is present at residues 26–28 (RGD). The region spanning 32–255 (RFCLQQPLDC…KRTEMKIRRA (224 aa)) is the Fibrinogen C-terminal domain. N-linked (GlcNAc...) asparagine glycans are attached at residues N87 and N137.

Homodimer. Can also form higher oligomers. Interacts with FBN1, FBN2 and LOX. Interacts with COL1A1 in a Ca (2+)-dependent manner. Interacts with ELN in a Ca (2+)-dependent manner; this interaction promotes ELN self-assembly.

The protein localises to the secreted. Its subcellular location is the extracellular space. The protein resides in the extracellular matrix. Could be involved in calcium-dependent cell adhesion or intercellular interactions. May contribute to the elastic fiber assembly and/or maintenance. This chain is Microfibril-associated glycoprotein 4 (MFAP4), found in Homo sapiens (Human).